We begin with the raw amino-acid sequence, 320 residues long: Short-chain dehydrogenase/reductase ARMGADRAFT_1169971 (320 aa).

A helical transmembrane segment spans residues 19–39 (KVAVVTGANSGIGLYILFHVA). NADP(+) contacts are provided by I30, D78, N105, and K136. N-linked (GlcNAc...) asparagine glycosylation occurs at N157. S159 serves as the catalytic Proton donor. Y192, K196, V227, and S229 together coordinate NADP(+). Y192 (proton acceptor) is an active-site residue. K196 serves as the catalytic Lowers pKa of active site Tyr. Residues 235 to 255 (LFTSLMFGTIINWVFSLFFIS) form a helical membrane-spanning segment.

The protein belongs to the short-chain dehydrogenases/reductases (SDR) family.

The protein localises to the membrane. Its pathway is secondary metabolite biosynthesis. In terms of biological role, short-chain dehydrogenase/reductase, part of the gene cluster that mediates the biosynthesis of melleolides, a range of antifungal and phytotoxic polyketide derivatives composed of an orsellinic acid (OA) moiety esterified to various sesquiterpene alcohols. The first step in melleolides biosynthesis is performed by the delta(6)-protoilludene synthase PRO1 which catalyzes the cyclization of farnesyl diphosphate to protoilludene. The orsellinic acid synthase armB produces OA by condensing acetyl-CoA with 3 malonyl-CoA units in a three-round chain elongation reaction folowed by a C2-C7 ring closure. ArmB further catalyzes the trans-esterification of OA to the various sesquiterpene alcohols resulting from the hydroxylation of protoilludene. The melleolides cluster also includes 5 cytochrome P450 monooxygenases, 4 NAD(+)-dependent oxidoreductases, one flavin-dependent oxidoreductase, and one O-methyltransferase. The cytochrome P450 monooxygenases may be involved in protoilludene hydroxylation to elaborate melleolides with multiple alcohol groups, such as melleolide D, which carries alcohol functionalities at C-4, C-5, C-10, and C-13. The role of the NAD(+)-dependent enzymes remains unknown. Numerous melleolides, including arnamial, show 5'-O-methylation of the aromatic moiety which may be catalyzed by the methyltransferase encoded in the cluster. The flavin-dependent oxidoreductase might represent the dehydrogenase yielding the aldehyde in position 1 of arnamial and other melleolides. Finally, several halogenase localized outside of the cluster, are able to catalyze the transfer of a single chlorine atom to the melleolide backbone, resulting in a 6'-chloromelleolide product. This is Short-chain dehydrogenase/reductase ARMGADRAFT_1169971 from Armillaria gallica (Bulbous honey fungus).